The chain runs to 89 residues: Small ribosomal subunit protein uS17 (89 aa).

It belongs to the universal ribosomal protein uS17 family. Part of the 30S ribosomal subunit.

One of the primary rRNA binding proteins, it binds specifically to the 5'-end of 16S ribosomal RNA. The chain is Small ribosomal subunit protein uS17 from Xylella fastidiosa (strain 9a5c).